A 198-amino-acid chain; its full sequence is uncharacterized protein (198 aa).

It is found in the cytoplasm. This is an uncharacterized protein from Saccharomyces cerevisiae (strain ATCC 204508 / S288c) (Baker's yeast).